The primary structure comprises 213 residues: Membrane-spanning 4-domains subfamily A member 3 (213 aa).

Topologically, residues 1–26 (MKPEETGGSVYQPLDESRHVQRGVLQ) are cytoplasmic. The helical transmembrane segment at 27–47 (ALGAIQILNGILILALGIFLV) threads the bilayer. Residues 48-58 (CLQHVSHHFRH) are Extracellular-facing. A helical membrane pass occupies residues 59–79 (FFFFTFYTGYPLWGAVFFISS). Topologically, residues 80–97 (GSLTVAAGRNPTRMLMQN) are cytoplasmic. A helical transmembrane segment spans residues 98–118 (SFGINIASTTIAFVGTVFLSV). Residues 119–148 (HLAFNTQAFKGCQSSPSPDVCISLGSSSDG) lie on the Extracellular side of the membrane. Residues 149 to 169 (LVSLMLILTLLELSVTISISA) traverse the membrane as a helical segment. The Cytoplasmic segment spans residues 170-213 (MWCLGNVCGLREAITSPPNSVESGILPEGSDSENLNTQPQASEE). The tract at residues 189–213 (SVESGILPEGSDSENLNTQPQASEE) is disordered. Over residues 201–213 (SENLNTQPQASEE) the composition is skewed to polar residues.

It belongs to the MS4A family. As to quaternary structure, interacts with CDKN3. Interacts with CDKN3-CDK2 complexes through its binding to CDKN3; this interaction facilitates dissociation of cyclin A from CDKN3-CDK2 complexes. As to expression, expressed at low levels only in specific immune tissues, such as, spleen, bone marrow and peripheral blood leukocytes.

It is found in the membrane. Functionally, hematopoietic modulator for the G1-S cell cycle transition. Modulates the level of phosphorylation of cyclin-dependent kinase 2 (CDK2) through its direct binding to cyclin-dependent kinase inhibitor 3 (CDKN3/KAP). This is Membrane-spanning 4-domains subfamily A member 3 (Ms4a3) from Mus musculus (Mouse).